Reading from the N-terminus, the 355-residue chain is Probable dual-specificity RNA methyltransferase RlmN (355 aa).

The active-site Proton acceptor is the Glu-89. Residues 95-322 (YENRKTVCLS…KRLGVPTSIR (228 aa)) form the Radical SAM core domain. The cysteines at positions 102 and 333 are disulfide-linked. 3 residues coordinate [4Fe-4S] cluster: Cys-109, Cys-113, and Cys-116. S-adenosyl-L-methionine contacts are provided by residues 159–160 (GE), Ser-191, 214–216 (SLH), and Asn-290. Cys-333 (S-methylcysteine intermediate) is an active-site residue.

The protein belongs to the radical SAM superfamily. RlmN family. [4Fe-4S] cluster serves as cofactor.

Its subcellular location is the cytoplasm. The catalysed reaction is adenosine(2503) in 23S rRNA + 2 reduced [2Fe-2S]-[ferredoxin] + 2 S-adenosyl-L-methionine = 2-methyladenosine(2503) in 23S rRNA + 5'-deoxyadenosine + L-methionine + 2 oxidized [2Fe-2S]-[ferredoxin] + S-adenosyl-L-homocysteine. The enzyme catalyses adenosine(37) in tRNA + 2 reduced [2Fe-2S]-[ferredoxin] + 2 S-adenosyl-L-methionine = 2-methyladenosine(37) in tRNA + 5'-deoxyadenosine + L-methionine + 2 oxidized [2Fe-2S]-[ferredoxin] + S-adenosyl-L-homocysteine. Its function is as follows. Specifically methylates position 2 of adenine 2503 in 23S rRNA and position 2 of adenine 37 in tRNAs. This is Probable dual-specificity RNA methyltransferase RlmN from Thermus thermophilus (strain ATCC 27634 / DSM 579 / HB8).